Here is a 417-residue protein sequence, read N- to C-terminus: Gamma-glutamyl phosphate reductase (417 aa).

The protein belongs to the gamma-glutamyl phosphate reductase family.

Its subcellular location is the cytoplasm. It catalyses the reaction L-glutamate 5-semialdehyde + phosphate + NADP(+) = L-glutamyl 5-phosphate + NADPH + H(+). It functions in the pathway amino-acid biosynthesis; L-proline biosynthesis; L-glutamate 5-semialdehyde from L-glutamate: step 2/2. In terms of biological role, catalyzes the NADPH-dependent reduction of L-glutamate 5-phosphate into L-glutamate 5-semialdehyde and phosphate. The product spontaneously undergoes cyclization to form 1-pyrroline-5-carboxylate. The protein is Gamma-glutamyl phosphate reductase of Haemophilus influenzae (strain PittEE).